The sequence spans 360 residues: MSELHEVQITEDNPLLQDPLKAAELAAKLLQVQEQKHSIETPYGVVTVTIQGTPKPKRPAIVTFHDVGMDHKMCFDTLFKYEDMCEIVKNFVVCHIDAPGQEDGATIYPPGYQYPSLDQLAETIPCVLQYLNFPSIIGIGVGAGAYIFAKYTLSHANTVEGLVLINIDPNAKGWMDWAAQKLTGLTQSISDKMLGHLFSAEEISGNSDVVRQYKASISNSPLISNYQLYWNSYNSRRDLNFERGGGVTLKCPVMLVVGDQAPHEDAVVECNSKLDPTQTSFLKMADSGGQPQITQPGKMTEAFKYFVQGMGYMASSVMTRLSRSRTASLSSEGNRSRSRTLSQSSESGGGPPAPLAEVTC.

A disordered region spans residues 324 to 360 (SRTASLSSEGNRSRSRTLSQSSESGGGPPAPLAEVTC).

Belongs to the NDRG family.

The protein localises to the cytoplasm. Functionally, contributes to the regulation of the Wnt signaling pathway. Down-regulates CTNNB1-mediated transcriptional activation of target genes. May be involved in neuron differentiation. The chain is Protein NDRG2 (ndrg2) from Xenopus laevis (African clawed frog).